Reading from the N-terminus, the 64-residue chain is MAKAKGARIIITLECTECRTNVNKRSPGVNRYTTTKNRRNTTARLELKKFCPHCNRHTVHKEIK.

It belongs to the bacterial ribosomal protein bL33 family.

In Synechococcus sp. (strain JA-2-3B'a(2-13)) (Cyanobacteria bacterium Yellowstone B-Prime), this protein is Large ribosomal subunit protein bL33.